A 530-amino-acid polypeptide reads, in one-letter code: Glucose-6-phosphate isomerase (530 aa).

Glu322 (proton donor) is an active-site residue. Residues His351 and Lys455 contribute to the active site.

This sequence belongs to the GPI family.

Its subcellular location is the cytoplasm. It catalyses the reaction alpha-D-glucose 6-phosphate = beta-D-fructose 6-phosphate. It participates in carbohydrate biosynthesis; gluconeogenesis. Its pathway is carbohydrate degradation; glycolysis; D-glyceraldehyde 3-phosphate and glycerone phosphate from D-glucose: step 2/4. Its function is as follows. Catalyzes the reversible isomerization of glucose-6-phosphate to fructose-6-phosphate. The polypeptide is Glucose-6-phosphate isomerase (Geotalea daltonii (strain DSM 22248 / JCM 15807 / FRC-32) (Geobacter daltonii)).